A 509-amino-acid polypeptide reads, in one-letter code: ATP synthase subunit alpha (509 aa).

169 to 176 is a binding site for ATP; it reads GDRQTGKT.

Belongs to the ATPase alpha/beta chains family. F-type ATPases have 2 components, CF(1) - the catalytic core - and CF(0) - the membrane proton channel. CF(1) has five subunits: alpha(3), beta(3), gamma(1), delta(1), epsilon(1). CF(0) has three main subunits: a(1), b(2) and c(9-12). The alpha and beta chains form an alternating ring which encloses part of the gamma chain. CF(1) is attached to CF(0) by a central stalk formed by the gamma and epsilon chains, while a peripheral stalk is formed by the delta and b chains.

Its subcellular location is the cell inner membrane. It carries out the reaction ATP + H2O + 4 H(+)(in) = ADP + phosphate + 5 H(+)(out). Functionally, produces ATP from ADP in the presence of a proton gradient across the membrane. The alpha chain is a regulatory subunit. This chain is ATP synthase subunit alpha, found in Methylobacterium sp. (strain 4-46).